Consider the following 495-residue polypeptide: UDP-N-acetylmuramoyl-L-alanyl-D-glutamate--2,6-diaminopimelate ligase (495 aa).

Residues L32 and S34 each contribute to the UDP-N-acetyl-alpha-D-muramoyl-L-alanyl-D-glutamate site. Residue 119–125 participates in ATP binding; it reads GTNGKTT. Residues N160, 161-162, S188, Q194, and R196 contribute to the UDP-N-acetyl-alpha-D-muramoyl-L-alanyl-D-glutamate site; that span reads TT. K228 is modified (N6-carboxylysine). Meso-2,6-diaminopimelate contacts are provided by residues R390, 414-417, G465, and E469; that span reads DNPR. Positions 414-417 match the Meso-diaminopimelate recognition motif motif; it reads DNPR.

It belongs to the MurCDEF family. MurE subfamily. The cofactor is Mg(2+). Post-translationally, carboxylation is probably crucial for Mg(2+) binding and, consequently, for the gamma-phosphate positioning of ATP.

Its subcellular location is the cytoplasm. It catalyses the reaction UDP-N-acetyl-alpha-D-muramoyl-L-alanyl-D-glutamate + meso-2,6-diaminopimelate + ATP = UDP-N-acetyl-alpha-D-muramoyl-L-alanyl-gamma-D-glutamyl-meso-2,6-diaminopimelate + ADP + phosphate + H(+). It functions in the pathway cell wall biogenesis; peptidoglycan biosynthesis. Its function is as follows. Catalyzes the addition of meso-diaminopimelic acid to the nucleotide precursor UDP-N-acetylmuramoyl-L-alanyl-D-glutamate (UMAG) in the biosynthesis of bacterial cell-wall peptidoglycan. In Vibrio cholerae serotype O1 (strain ATCC 39315 / El Tor Inaba N16961), this protein is UDP-N-acetylmuramoyl-L-alanyl-D-glutamate--2,6-diaminopimelate ligase.